Consider the following 1012-residue polypeptide: ATP-dependent DNA helicase MPH1 (1012 aa).

The Helicase ATP-binding domain maps to 94-261 (IVQKSLYQNT…EVVNNLNISN (168 aa)). ATP is bound at residue 107-114 (IPTGMGKT). The DEAH box signature appears at 209–212 (DEAH). The 225-residue stretch at 430–654 (KLQKIINELS…NFVEYKKSDR (225 aa)) folds into the Helicase C-terminal domain. A disordered region spans residues 493 to 555 (DEGFIRKNKP…AQISGMNQKQ (63 aa)). Over residues 498–510 (RKNKPKGRKKADR) the composition is skewed to basic residues. Basic and acidic residues predominate over residues 511-537 (LKRLEEDKQKQLSKAKQKEQEKVERSS).

Belongs to the DEAD box helicase family. DEAH subfamily. FANCM sub-subfamily. As to quaternary structure, interacts with the MHF histone-fold complex to form the FANCM-MHF complex.

The protein resides in the nucleus. The catalysed reaction is ATP + H2O = ADP + phosphate + H(+). In terms of biological role, ATP-dependent DNA helicase involved in DNA damage repair by homologous recombination and in genome maintenance. Capable of unwinding D-loops. Plays a role in limiting crossover recombinants during mitotic DNA double-strand break (DSB) repair. Component of a FANCM-MHF complex which promotes gene conversion at blocked replication forks, probably by reversal of the stalled fork. This chain is ATP-dependent DNA helicase MPH1, found in Vanderwaltozyma polyspora (strain ATCC 22028 / DSM 70294 / BCRC 21397 / CBS 2163 / NBRC 10782 / NRRL Y-8283 / UCD 57-17) (Kluyveromyces polysporus).